The sequence spans 95 residues: Acylphosphatase (95 aa).

The 88-residue stretch at 7–94 (AALVRITGRV…EAPAGFRITR (88 aa)) folds into the Acylphosphatase-like domain. Active-site residues include Arg-22 and Asn-40. Residues 76–88 (VASEEASSAEAPA) are compositionally biased toward low complexity. The interval 76–95 (VASEEASSAEAPAGFRITRG) is disordered.

This sequence belongs to the acylphosphatase family.

The enzyme catalyses an acyl phosphate + H2O = a carboxylate + phosphate + H(+). This chain is Acylphosphatase (acyP), found in Rhizobium meliloti (strain 1021) (Ensifer meliloti).